Reading from the N-terminus, the 238-residue chain is Ribosomal RNA small subunit methyltransferase G (238 aa).

S-adenosyl-L-methionine is bound by residues G77, F82, A128–E129, and R147. A disordered region spans residues K219–E238.

This sequence belongs to the methyltransferase superfamily. RNA methyltransferase RsmG family.

The protein resides in the cytoplasm. Functionally, specifically methylates the N7 position of guanine in position 535 of 16S rRNA. This chain is Ribosomal RNA small subunit methyltransferase G, found in Listeria monocytogenes serovar 1/2a (strain ATCC BAA-679 / EGD-e).